Here is an 88-residue protein sequence, read N- to C-terminus: Large ribosomal subunit protein eL31 (88 aa).

Belongs to the eukaryotic ribosomal protein eL31 family.

The sequence is that of Large ribosomal subunit protein eL31 (rpl31e) from Archaeoglobus fulgidus (strain ATCC 49558 / DSM 4304 / JCM 9628 / NBRC 100126 / VC-16).